A 555-amino-acid polypeptide reads, in one-letter code: Probable beta-glucosidase btgE (555 aa).

An N-terminal signal peptide occupies residues 1 to 18 (MRGAILATAAAFAGTAVA). Disordered regions lie at residues 92 to 114 (TSSA…VTLP) and 263 to 290 (TTSA…PTGA). The span at 263–288 (TTSAASTTTAVPSSSTTTSSATSVPT) shows a compositional bias: low complexity. Residue Glu-392 is the Proton donor of the active site. Glu-488 serves as the catalytic Nucleophile.

It belongs to the glycosyl hydrolase 17 family.

It is found in the secreted. The protein localises to the cell wall. It carries out the reaction Hydrolysis of terminal, non-reducing beta-D-glucosyl residues with release of beta-D-glucose.. It participates in glycan metabolism; cellulose degradation. Its function is as follows. Beta-glucosidases are one of a number of cellulolytic enzymes involved in the degradation of cellulosic biomass. Catalyzes the last step releasing glucose from the inhibitory cellobiose. In Emericella nidulans (strain FGSC A4 / ATCC 38163 / CBS 112.46 / NRRL 194 / M139) (Aspergillus nidulans), this protein is Probable beta-glucosidase btgE (btgE).